The primary structure comprises 350 residues: S-adenosylmethionine:tRNA ribosyltransferase-isomerase (350 aa).

This sequence belongs to the QueA family. Monomer.

It is found in the cytoplasm. It carries out the reaction 7-aminomethyl-7-carbaguanosine(34) in tRNA + S-adenosyl-L-methionine = epoxyqueuosine(34) in tRNA + adenine + L-methionine + 2 H(+). It participates in tRNA modification; tRNA-queuosine biosynthesis. Transfers and isomerizes the ribose moiety from AdoMet to the 7-aminomethyl group of 7-deazaguanine (preQ1-tRNA) to give epoxyqueuosine (oQ-tRNA). This is S-adenosylmethionine:tRNA ribosyltransferase-isomerase from Bacillus cereus (strain G9842).